We begin with the raw amino-acid sequence, 491 residues long: Glutamyl-tRNA(Gln) amidotransferase subunit A (491 aa).

Catalysis depends on charge relay system residues lysine 78 and serine 158. The active-site Acyl-ester intermediate is serine 182.

This sequence belongs to the amidase family. GatA subfamily. Heterotrimer of A, B and C subunits.

It catalyses the reaction L-glutamyl-tRNA(Gln) + L-glutamine + ATP + H2O = L-glutaminyl-tRNA(Gln) + L-glutamate + ADP + phosphate + H(+). Its function is as follows. Allows the formation of correctly charged Gln-tRNA(Gln) through the transamidation of misacylated Glu-tRNA(Gln) in organisms which lack glutaminyl-tRNA synthetase. The reaction takes place in the presence of glutamine and ATP through an activated gamma-phospho-Glu-tRNA(Gln). The protein is Glutamyl-tRNA(Gln) amidotransferase subunit A of Afipia carboxidovorans (strain ATCC 49405 / DSM 1227 / KCTC 32145 / OM5) (Oligotropha carboxidovorans).